A 177-amino-acid polypeptide reads, in one-letter code: ATP synthase subunit delta (177 aa).

Belongs to the ATPase delta chain family. F-type ATPases have 2 components, F(1) - the catalytic core - and F(0) - the membrane proton channel. F(1) has five subunits: alpha(3), beta(3), gamma(1), delta(1), epsilon(1). F(0) has three main subunits: a(1), b(2) and c(10-14). The alpha and beta chains form an alternating ring which encloses part of the gamma chain. F(1) is attached to F(0) by a central stalk formed by the gamma and epsilon chains, while a peripheral stalk is formed by the delta and b chains.

It is found in the cell inner membrane. Functionally, f(1)F(0) ATP synthase produces ATP from ADP in the presence of a proton or sodium gradient. F-type ATPases consist of two structural domains, F(1) containing the extramembraneous catalytic core and F(0) containing the membrane proton channel, linked together by a central stalk and a peripheral stalk. During catalysis, ATP synthesis in the catalytic domain of F(1) is coupled via a rotary mechanism of the central stalk subunits to proton translocation. Its function is as follows. This protein is part of the stalk that links CF(0) to CF(1). It either transmits conformational changes from CF(0) to CF(1) or is implicated in proton conduction. In Shewanella sp. (strain MR-4), this protein is ATP synthase subunit delta.